Consider the following 1294-residue polypeptide: von Willebrand factor A domain-containing protein 3B (1294 aa).

In terms of domain architecture, VWFA spans C508–M684. 4 disordered regions span residues C732–W754, R778–R803, A1012–K1036, and D1193–A1247. A compositionally biased stretch (polar residues) spans D738–N748. Residues R778–S787 show a composition bias toward low complexity. Basic and acidic residues predominate over residues D1193–R1202. Positions E1203–A1212 are enriched in basic residues. Positions K1213–S1236 are enriched in low complexity.

It localises to the cytoplasm. The protein is von Willebrand factor A domain-containing protein 3B (VWA3B) of Homo sapiens (Human).